Reading from the N-terminus, the 237-residue chain is Mitochondrial carrier-like protein L276 (237 aa).

3 Solcar repeats span residues 1-83, 85-161, and 164-233; these read MAKY…FENK, YPYT…LNEY, and KPVV…LNKK. The next 5 membrane-spanning stretches (helical) occupy residues 11-27, 60-76, 91-108, 140-160, and 166-183; these read AIATIVAEIITLPICTF, VPAIMSQTYSTSSKYFL, MINGIISGIMTSLITHPI, SFGKTVISSSMFFPLYETLNE, and VVSSMLTAIISTTIMQPL. Residues 191 to 196 carry the Substrate recognition motif; it reads IYGLSL. A helical membrane pass occupies residues 205 to 226; the sequence is YYRGLSLNLMRIVPHFVITMTT.

Belongs to the mitochondrial carrier (TC 2.A.29) family.

The protein localises to the host mitochondrion inner membrane. Transports dATP and to a lesser extent dTTP, TTP, UTP and ADP, possibly across the mitochondrial inner membrane. This Acanthamoeba polyphaga (Amoeba) protein is Mitochondrial carrier-like protein L276.